The primary structure comprises 1178 residues: Niemann-Pick type C1-related protein (1178 aa).

N-linked (GlcNAc...) asparagine glycosylation occurs at N41. 2 helical membrane-spanning segments follow: residues 157 to 177 and 412 to 432; these read PWLF…GIFL and VVEW…TSVV. One can recognise an SSD domain in the interval 414 to 570; that stretch reads EWLRLCAAVL…LTFFLAGLSL (157 aa). A glycan (N-linked (GlcNAc...) asparagine) is linked at N433. The next 4 membrane-spanning stretches (helical) occupy residues 448-468, 478-498, 516-536, and 545-565; these read GALA…LCGV, PFLA…AYSL, AGLS…IGAL, and FCII…TFFL. The N-linked (GlcNAc...) asparagine glycan is linked to N621. A helical transmembrane segment spans residues 789-809; sequence ATVLVIFAAVTALAIYGATTL. 2 N-linked (GlcNAc...) asparagine glycosylation sites follow: N917 and N943. Transmembrane regions (helical) follow at residues 986 to 1006, 1013 to 1033, 1037 to 1057, 1080 to 1100, and 1114 to 1134; these read FTLT…LLLI, IIVV…MALI, LSMI…DFTI, IVMG…ILAL, and MMFM…PVVL.

It belongs to the patched family.

The protein localises to the inner membrane complex. It catalyses the reaction cholesterol(in) = cholesterol(out). Its function is as follows. Likely facilitates the efflux of cholesterol and gangliosides from membranes. Plays a role in the regulation of lipid homeostasis. This Toxoplasma gondii (strain ATCC 50611 / Me49) protein is Niemann-Pick type C1-related protein.